The chain runs to 271 residues: Putative hydro-lyase OCAR_7359/OCA5_c07590 (271 aa).

The protein belongs to the D-glutamate cyclase family.

The protein is Putative hydro-lyase OCAR_7359/OCA5_c07590 of Afipia carboxidovorans (strain ATCC 49405 / DSM 1227 / KCTC 32145 / OM5) (Oligotropha carboxidovorans).